The sequence spans 311 residues: Olfactory receptor 4K1 (311 aa).

Over 1–25 (MAHTNESMVSEFVLLGLSNSWGLQL) the chain is Extracellular. The N-linked (GlcNAc...) asparagine glycan is linked to Asn5. A helical membrane pass occupies residues 26 to 49 (FFFAIFSIVYVTSVLGNVLIIVII). Residues 50 to 57 (SFDSHLNS) are Cytoplasmic-facing. Residues 58–79 (PMYFLLSNLSFIDICQSNFATP) form a helical membrane-spanning segment. Residues 80–100 (KMLVDFFIERKTISFEGCMAQ) lie on the Extracellular side of the membrane. A disulfide bridge links Cys97 with Cys189. The helical transmembrane segment at 101–120 (IFVLHSFVGSEMMLLVAMAY) threads the bilayer. Residues 121-139 (DRFIAICKPLHYSTIMNRR) lie on the Cytoplasmic side of the membrane. A helical transmembrane segment spans residues 140 to 158 (LCVIFVSISWAVGVLHSVS). At 159–195 (HLAFTVDLPFCGPNEVDSFFCDLPLVIELACMDTYEM) the chain is on the extracellular side. A helical membrane pass occupies residues 196–219 (EIMTLTNSGLISLSCFLALIISYT). At 220–235 (IILIGVRCRSSSGSSK) the chain is on the cytoplasmic side. A helical membrane pass occupies residues 236–258 (ALSTLTAHITVVILFFGPCIYFY). Over 259–269 (IWPFSRLPVDK) the chain is Extracellular. The chain crosses the membrane as a helical span at residues 270 to 289 (FLSVFYTVCTPLLNPIIYSL). Topologically, residues 290–311 (RNEDVKAAMWKLRNRHVNSWKN) are cytoplasmic.

This sequence belongs to the G-protein coupled receptor 1 family.

Its subcellular location is the cell membrane. Its function is as follows. Odorant receptor. The protein is Olfactory receptor 4K1 (OR4K1) of Homo sapiens (Human).